The chain runs to 287 residues: MHQISGINAASPEKNNSKLADVSLQQFLANVDEIRHVLTTLSADRHAIYMEQVESLAAGCSDTAKCRKLNDHVDKFIAQARGIRRRLADASEELVQYPESRVGSGRARHEQIQMLIVSLEGIMSQFADDQASYKAEAAKKIAAYLRKQNIEVTDSEIDGAIENGSLFQLTRNINLGVAQKKALFDDMKNRATDIMILEKQIREVEELFVDMQLLVQSQGETVDRIETSVIRAEEYAEQAQQNVRQAVVLRRKNRKWKIVTCIALIVLLLVVVYLLSHFLGAIIPGWK.

The Cytoplasmic segment spans residues 1-262 (MHQISGINAA…NRKWKIVTCI (262 aa)). A coiled-coil region spans residues 65 to 97 (KCRKLNDHVDKFIAQARGIRRRLADASEELVQY). The 63-residue stretch at 184-246 (FDDMKNRATD…EQAQQNVRQA (63 aa)) folds into the t-SNARE coiled-coil homology domain. A helical; Anchor for type IV membrane protein transmembrane segment spans residues 263 to 283 (ALIVLLLVVVYLLSHFLGAII). Residues 284 to 287 (PGWK) are Extracellular-facing.

It belongs to the syntaxin family.

It is found in the membrane. Functionally, potentially involved in docking of synaptic vesicles at presynaptic active zones. This Caenorhabditis elegans protein is Putative syntaxin-4 (syx-4).